The sequence spans 289 residues: Phospholipase C (289 aa).

An N-terminal signal peptide occupies residues 1–25 (MKFKKVVLGMCLIASVLVFPVTIKA). A propeptide spanning residues 26-51 (NACCDEYLQTPAAPHDIDSKLPHKLS) is cleaved from the precursor. Residues Trp-52, His-65, Asp-106, His-120, His-169, Asp-173, His-179, His-193, and Glu-197 each coordinate Zn(2+). The 238-residue stretch at 52 to 289 (WSADNPTNTD…LEFWSKKTNE (238 aa)) folds into the Zn-dependent PLC domain.

Belongs to the bacterial zinc-metallophospholipase C family. As to quaternary structure, forms monomers, dimers and higher order oligomers, but only the monomer is enzymatically active. Zn(2+) is required as a cofactor.

It localises to the secreted. The catalysed reaction is a 1,2-diacyl-sn-glycero-3-phosphocholine + H2O = phosphocholine + a 1,2-diacyl-sn-glycerol + H(+). It catalyses the reaction 1,2-dihexadecanoyl-sn-glycero-3-phosphocholine + H2O = 1,2-dihexadecanoyl-sn-glycerol + phosphocholine + H(+). The enzyme catalyses 1-hexadecanoyl-2-(9Z-octadecenoyl)-sn-glycero-3-phosphocholine + H2O = 1-hexadecanoyl-2-(9Z-octadecenoyl)-sn-glycerol + phosphocholine + H(+). It carries out the reaction 1,2-di-(9Z-octadecenoyl)-sn-glycero-3-phosphocholine + H2O = 1,2-di-(9Z-octadecenoyl)-sn-glycerol + phosphocholine + H(+). The catalysed reaction is a 1,2-diacyl-sn-glycero-3-phosphoethanolamine + H2O = phosphoethanolamine + a 1,2-diacyl-sn-glycerol + H(+). It catalyses the reaction 1,2-di-(9Z-octadecenoyl)-sn-glycero-3-phosphoethanolamine + H2O = phosphoethanolamine + 1,2-di-(9Z-octadecenoyl)-sn-glycerol + H(+). The enzyme catalyses 1,2-dihexadecanoyl-sn-glycero-3-phosphoethanolamine + H2O = 1,2-dihexadecanoyl-sn-glycerol + phosphoethanolamine + H(+). It carries out the reaction a 1,2-diacyl-sn-glycero-3-phospho-L-serine + H2O = O-phospho-L-serine + a 1,2-diacyl-sn-glycerol + H(+). The catalysed reaction is a 1,2-diacyl-sn-glycero-3-phosphoglycerol + H2O = glycerol 1-phosphate + a 1,2-diacyl-sn-glycerol + H(+). It catalyses the reaction a 1,2-diacyl-sn-glycero-3-phospho-(1D-myo-inositol) + H2O = 1D-myo-inositol 1-phosphate + a 1,2-diacyl-sn-glycerol + H(+). The enzyme catalyses a sphingomyelin + H2O = phosphocholine + an N-acylsphing-4-enine + H(+). It carries out the reaction a 1-O-(1Z-alkenyl)-2-acyl-sn-glycero-3-phosphoethanolamine + H2O = a 1-O-(1Z-alkenyl)-2-acyl-sn-glycerol + phosphoethanolamine + H(+). Enzymatic activity of LmPC-PLC can be specifically inhibited by its propeptide added in trans. The tendency of the enzyme to oligomerize, which appears to largely attenuate the enzymatic activity, may be one of the mechanisms regulating phospholipase activity in the host cell during the different steps of the infection cycle of L.monocytogenes. Enzyme activity is inhibited by EDTA and o-phenanthroline in vitro. Its function is as follows. Major virulence factor whose phospholipase activity facilitates pore formation by the pore-forming toxin listeriolysin O (LLO), leading to vacuolar membrane disruption and vacuolar escape of L.monocytogenes, which enables the bacterium to spread in the host. Acts as a phospholipase C exhibiting broad substrate specificity, with the highest activities towards diacylglycerophospholipids with phosphocholine, phosphoserine, and phosphoethanolamine head groups, but less towards phosphoglycerol or phosphoinositol head groups. Is also able to hydrolyze sphingomyelin and plasmenylethanolamine. The sequence is that of Phospholipase C from Listeria monocytogenes serovar 1/2a (strain ATCC BAA-679 / EGD-e).